A 151-amino-acid chain; its full sequence is SsrA-binding protein (151 aa).

The protein belongs to the SmpB family.

Its subcellular location is the cytoplasm. Its function is as follows. Required for rescue of stalled ribosomes mediated by trans-translation. Binds to transfer-messenger RNA (tmRNA), required for stable association of tmRNA with ribosomes. tmRNA and SmpB together mimic tRNA shape, replacing the anticodon stem-loop with SmpB. tmRNA is encoded by the ssrA gene; the 2 termini fold to resemble tRNA(Ala) and it encodes a 'tag peptide', a short internal open reading frame. During trans-translation Ala-aminoacylated tmRNA acts like a tRNA, entering the A-site of stalled ribosomes, displacing the stalled mRNA. The ribosome then switches to translate the ORF on the tmRNA; the nascent peptide is terminated with the 'tag peptide' encoded by the tmRNA and targeted for degradation. The ribosome is freed to recommence translation, which seems to be the essential function of trans-translation. The protein is SsrA-binding protein of Campylobacter concisus (strain 13826).